A 263-amino-acid chain; its full sequence is Caveolae-associated protein 3 (263 aa).

The interval 1-84 (MGESALEPGP…SNTLAQLLAK (84 aa)) is interaction with CAVIN1. The segment at 20-78 (VHAVTVVTLLEKLATMLEALRERQGGLAERQGGLAGSVRRIQSGLGALSRSHDTTSNTL) is leucine-zipper. Residues Ser62 and Ser70 each carry the phosphoserine modification. Residue Lys128 forms a Glycyl lysine isopeptide (Lys-Gly) (interchain with G-Cter in SUMO2) linkage. Residues 135 to 203 (ARAFQKAPEL…SSRKGSEAAQ (69 aa)) form an interaction with CAV1 region. The tract at residues 141 to 263 (APELLGPEDQ…RPVLQIESAA (123 aa)) is disordered. A compositionally biased stretch (acidic residues) spans 157 to 170 (QPEDEVGESSDEEP). Ser165, Ser166, Ser173, and Ser199 each carry phosphoserine. Positions 219–234 (EGPAEGQPAAQPAMEP) are enriched in low complexity.

The protein belongs to the CAVIN family. Component of the CAVIN complex composed of CAVIN1, CAVIN2, CAVIN3 and CAVIN4. Interacts with PRKCD and with phosphatidylserine. Phosphatidylserine may form a bridge between PKC and PKC-binding partners and stabilize the binding. Interacts with PER2. Interacts with CAVIN1 and EPS15L1. Interacts (via leucine-zipper domain) with CAV1 in a cholesterol-sensitive manner. Post-translationally, in vitro, phosphorylated by PRKCD.

The protein localises to the cytoplasm. The protein resides in the membrane. It localises to the caveola. Its subcellular location is the cytosol. Functionally, regulates the traffic and/or budding of caveolae. Plays a role in caveola formation in a tissue-specific manner. Required for the formation of caveolae in smooth muscle but not in the lung and heart endothelial cells. Regulates the equilibrium between cell surface-associated and cell surface-dissociated caveolae by promoting the rapid release of caveolae from the cell surface. Plays a role in the regulation of the circadian clock. Modulates the period length and phase of circadian gene expression and also regulates expression and interaction of the core clock components PER1/2 and CRY1/2. Seems to have an immune potentiation function, especially in the glioma. This chain is Caveolae-associated protein 3, found in Rattus norvegicus (Rat).